The sequence spans 399 residues: Na(+)/H(+) antiporter NhaA (399 aa).

A run of 11 helical transmembrane segments spans residues 14–34 (AGGI…NSPL), 59–79 (LIHW…GLEV), 95–115 (SLPT…YLLF), 124–144 (AGWA…MALL), 154–174 (VFLL…IAMF), 177–197 (TDLS…LVGL), 213–233 (LILW…GVII), 261–281 (FIIL…PMSF), 290–310 (VGIA…FSYI), 331–351 (VALM…LAFV), and 363–383 (LGIL…LAKV).

The protein belongs to the NhaA Na(+)/H(+) (TC 2.A.33) antiporter family.

It is found in the cell inner membrane. The enzyme catalyses Na(+)(in) + 2 H(+)(out) = Na(+)(out) + 2 H(+)(in). In terms of biological role, na(+)/H(+) antiporter that extrudes sodium in exchange for external protons. In Shewanella sediminis (strain HAW-EB3), this protein is Na(+)/H(+) antiporter NhaA.